The following is a 469-amino-acid chain: Receptor-type adenylate cyclase (469 aa).

Topologically, residues 1-59 (VDTAEKLSKNGCASNYGATQISVWSMARALNASIPPLTNPMTPSMTFRNSNAGRISGVA) are extracellular. The N-linked (GlcNAc...) asparagine glycan is linked to N31. A helical membrane pass occupies residues 60–80 (LVGVIIGGALALFLVVALGVV). The Cytoplasmic portion of the chain corresponds to 81–469 (PYFFLHNTRD…IDLENDSTTS (389 aa)). The Guanylate cyclase domain occupies 103–257 (TLIFTDIESS…RTSNMAARTE (155 aa)). The Mg(2+) site is built by D108 and D151.

Belongs to the adenylyl cyclase class-3 family. Requires Mg(2+) as cofactor.

The protein resides in the cell membrane. It catalyses the reaction ATP = 3',5'-cyclic AMP + diphosphate. Functionally, could act as a receptor for an unknown ligand. This chain is Receptor-type adenylate cyclase (ESAG4C), found in Trypanosoma equiperdum.